A 171-amino-acid chain; its full sequence is Ribosome maturation factor RimM (171 aa).

One can recognise a PRC barrel domain in the interval 97–170 (EGEYYYHEVI…QVTIHVMEGL (74 aa)).

This sequence belongs to the RimM family. Binds ribosomal protein uS19.

Its subcellular location is the cytoplasm. An accessory protein needed during the final step in the assembly of 30S ribosomal subunit, possibly for assembly of the head region. Essential for efficient processing of 16S rRNA. May be needed both before and after RbfA during the maturation of 16S rRNA. It has affinity for free ribosomal 30S subunits but not for 70S ribosomes. This Bacillus cytotoxicus (strain DSM 22905 / CIP 110041 / 391-98 / NVH 391-98) protein is Ribosome maturation factor RimM.